The following is a 59-amino-acid chain: Potassium channel toxin alpha-KTx 3.10 (59 aa).

Positions 1–22 (MKVFFAVLIALFVCSMVIGIHG) are cleaved as a signal peptide. 3 disulfides stabilise this stretch: C30-C50, C36-C55, and C40-C57.

It belongs to the short scorpion toxin superfamily. Potassium channel inhibitor family. Alpha-KTx 03 subfamily. Expressed by the venom gland.

Its subcellular location is the secreted. Inhibits insect potassium channel. Is at least a 100-fold more potent against the Drosophila Shaker channel than towards its mammalian homologs Kv1.1/KCNA1 and Kv1.3/KCNA3. The protein is Potassium channel toxin alpha-KTx 3.10 of Buthus israelis (Israeli scorpion).